The primary structure comprises 250 residues: mRNA-decapping protein g5R (250 aa).

A Nudix hydrolase domain is found at 97 to 239; it reads QKFRKNWLLP…NLEPMIGPAF (143 aa). Positions 132–153 match the Nudix box motif; sequence GKPKEDESDLTCAIREFEEETG. Mg(2+) is bound at residue Glu138. Glu147 functions as the Nucleophile in the catalytic mechanism. Mg(2+)-binding residues include Glu151 and Asp173.

Belongs to the Nudix hydrolase family. DIPP subfamily. Interacts with host RPL23A. Requires Mg(2+) as cofactor. Mn(2+) is required as a cofactor.

It localises to the host rough endoplasmic reticulum. The enzyme catalyses diphospho-myo-inositol polyphosphate + H2O = myo-inositol polyphosphate + phosphate.. Decapping enzyme required for the removal of the 5'-end m7GpppN cap tethered to viral and host mRNAs to allow their decay in cells. May therefore accelerate viral and cellular mRNA turnover to eliminate competing host mRNAs and allow stage-specific synthesis of viral proteins. Acceleration of the turnover of cellular transcripts may even promote the shutoff of host protein synthesis. In addition to the mRNA cap, g5R also efficiently hydrolyzes diphosphoinositol polyphosphates. Down-regulation of the level of PP-InsP5 (diphosphoinositol pentakisphosphate) may play a role in viral manipulation of the cellular secretory pathway, a step necessary for the formation of virions. Binds viral and cellular poly(A) mRNAs, thereby decreasing both types of mRNAs. The sequence is that of mRNA-decapping protein g5R from Ornithodoros (relapsing fever ticks).